A 606-amino-acid chain; its full sequence is NADH-ubiquinone oxidoreductase chain 5 (606 aa).

The next 15 membrane-spanning stretches (helical) occupy residues Phe4–Leu24, Ala43–Ile63, Met87–Tyr107, Phe117–Leu137, Leu140–Gly160, Ala171–Thr191, Leu213–Leu233, Thr241–Ile261, Phe272–Ala292, Leu310–Cys330, Met366–Leu386, Leu413–Gly433, Leu457–Ile477, Met482–Leu502, and Gly582–Phe602.

Core subunit of respiratory chain NADH dehydrogenase (Complex I) which is composed of 45 different subunits.

It localises to the mitochondrion inner membrane. The enzyme catalyses a ubiquinone + NADH + 5 H(+)(in) = a ubiquinol + NAD(+) + 4 H(+)(out). Functionally, core subunit of the mitochondrial membrane respiratory chain NADH dehydrogenase (Complex I) which catalyzes electron transfer from NADH through the respiratory chain, using ubiquinone as an electron acceptor. Essential for the catalytic activity and assembly of complex I. The sequence is that of NADH-ubiquinone oxidoreductase chain 5 (MT-ND5) from Bos indicus (Zebu).